We begin with the raw amino-acid sequence, 356 residues long: Protein RecA (356 aa).

Residue G68–T75 coordinates ATP.

The protein belongs to the RecA family.

It localises to the cytoplasm. Functionally, can catalyze the hydrolysis of ATP in the presence of single-stranded DNA, the ATP-dependent uptake of single-stranded DNA by duplex DNA, and the ATP-dependent hybridization of homologous single-stranded DNAs. It interacts with LexA causing its activation and leading to its autocatalytic cleavage. This is Protein RecA from Thermotoga petrophila (strain ATCC BAA-488 / DSM 13995 / JCM 10881 / RKU-1).